The following is a 606-amino-acid chain: Threonine dehydratase 1 biosynthetic, chloroplastic (606 aa).

Lys-154 carries the N6-(pyridoxal phosphate)lysine modification. 2 ACT-like domains span residues 432 to 504 (AVLA…NLTD) and 526 to 597 (LLCR…MESL).

Belongs to the serine/threonine dehydratase family. Requires pyridoxal 5'-phosphate as cofactor. As to expression, expressed constitutively in all tissues examined including root, stem, petiole, leaf, immature flower bud, unopened flower and opened flower with the highest expression in opened flower and lowest in leaf.

It is found in the plastid. Its subcellular location is the chloroplast. It carries out the reaction L-threonine = 2-oxobutanoate + NH4(+). It participates in amino-acid biosynthesis; L-isoleucine biosynthesis; 2-oxobutanoate from L-threonine: step 1/1. Its activity is regulated as follows. Strongly inhibited by 1 mM isoleucine. Its function is as follows. Has a housekeeping role in isoleucine biosynthesis. In Solanum lycopersicum (Tomato), this protein is Threonine dehydratase 1 biosynthetic, chloroplastic.